The sequence spans 317 residues: Melanocyte-stimulating hormone receptor (317 aa).

At M1 to H37 the chain is on the extracellular side. 2 N-linked (GlcNAc...) asparagine glycosylation sites follow: N15 and N29. A helical membrane pass occupies residues V38–I63. Over A64–P72 the chain is Cytoplasmic. Residues M73–L93 form a helical membrane-spanning segment. Topologically, residues E94–N118 are extracellular. Residues V119–V140 form a helical membrane-spanning segment. Topologically, residues D141–W163 are cytoplasmic. Residues A164–Y183 traverse the membrane as a helical segment. The Extracellular portion of the chain corresponds to N184 to C191. The chain crosses the membrane as a helical span at residues L192–L211. Residues A212–A240 are Cytoplasmic-facing. A helical membrane pass occupies residues A241–L266. Residues C267–N279 lie on the Extracellular side of the membrane. A helical membrane pass occupies residues L280–F300. At R301–W317 the chain is on the cytoplasmic side. C315 carries the S-palmitoyl cysteine lipid modification.

This sequence belongs to the G-protein coupled receptor 1 family. As to quaternary structure, interacts with MGRN1, but does not undergo MGRN1-mediated ubiquitination; this interaction competes with GNAS-binding and thus inhibits agonist-induced cAMP production. Interacts with OPN3; the interaction results in a decrease in MC1R-mediated cAMP signaling and ultimately a decrease in melanin production in melanocytes.

The protein localises to the cell membrane. Functionally, receptor for MSH (alpha, beta and gamma) and ACTH. The activity of this receptor is mediated by G proteins which activate adenylate cyclase. Mediates melanogenesis, the production of eumelanin (black/brown) and phaeomelanin (red/yellow), via regulation of cAMP signaling in melanocytes. This chain is Melanocyte-stimulating hormone receptor (MC1R), found in Chaetodipus penicillatus (Desert pocket mouse).